The chain runs to 66 residues: U10-theraphotoxin-Cg1a 2 (66 aa).

Residues 1 to 21 form the signal peptide; it reads MKTSVLFVIFGLALLLCLSFA. The propeptide occupies 22-29; sequence AELEDTGR. 3 disulfide bridges follow: Cys-31-Cys-46, Cys-38-Cys-51, and Cys-45-Cys-58.

It belongs to the neurotoxin 10 (Hwtx-1) family. 29 (Jztx-13) subfamily. As to expression, expressed by the venom gland.

It localises to the secreted. Functionally, probable ion channel inhibitor. The sequence is that of U10-theraphotoxin-Cg1a 2 from Chilobrachys guangxiensis (Chinese earth tiger tarantula).